We begin with the raw amino-acid sequence, 328 residues long: Ubiquitin-conjugating enzyme E2 Z (328 aa).

Positions 71–225 (QCILRIKRDI…IRHETMRVAV (155 aa)) constitute a UBC core domain. Cys-160 acts as the Glycyl thioester intermediate in catalysis. Residues 295 to 328 (RLREKCPPEDNDGDSDSDTSSSGTDPDSQGSSQP) form a disordered region. Positions 312 to 328 (DTSSSGTDPDSQGSSQP) are enriched in low complexity.

This sequence belongs to the ubiquitin-conjugating enzyme family.

It is found in the cytoplasm. The protein localises to the nucleus. The enzyme catalyses S-ubiquitinyl-[E1 ubiquitin-activating enzyme]-L-cysteine + [E2 ubiquitin-conjugating enzyme]-L-cysteine = [E1 ubiquitin-activating enzyme]-L-cysteine + S-ubiquitinyl-[E2 ubiquitin-conjugating enzyme]-L-cysteine.. It participates in protein modification; protein ubiquitination. Its function is as follows. Catalyzes the covalent attachment of ubiquitin to other proteins. May be involved in apoptosis regulation. This chain is Ubiquitin-conjugating enzyme E2 Z (ube2z), found in Danio rerio (Zebrafish).